Consider the following 551-residue polypeptide: Arylsulfatase (551 aa).

The first 20 residues, 1 to 20 (MKSAPFLFLLGLLGLVTAQT), serve as a signal peptide directing secretion. Blocked amino end (Gln) is present on Q21. Residues D60, H61, and C100 each coordinate Ca(2+). The active-site Nucleophile is C100. Residue C100 is modified to 3-oxoalanine (Cys). The active site involves H158. N-linked (GlcNAc...) asparagine glycosylation is found at N164, N213, and N296. Residues D308 and H309 each coordinate Ca(2+).

This sequence belongs to the sulfatase family. It depends on Ca(2+) as a cofactor. The conversion to 3-oxoalanine (also known as C-formylglycine, FGly), of a serine or cysteine residue in prokaryotes and of a cysteine residue in eukaryotes, is critical for catalytic activity.

The protein resides in the cytoplasm. Its subcellular location is the secreted. It localises to the extracellular space. The protein localises to the extracellular matrix. It carries out the reaction an aryl sulfate + H2O = a phenol + sulfate + H(+). Its function is as follows. May be a structural component of the extracellular matrices involved in cell movement during morphogenesis. This chain is Arylsulfatase, found in Hemicentrotus pulcherrimus (Sea urchin).